We begin with the raw amino-acid sequence, 238 residues long: Thrombin-like enzyme collinein-1 (238 aa).

The 229-residue stretch at 1–229 (VIGGDECNIN…HLDWIQNIIA (229 aa)) folds into the Peptidase S1 domain. Intrachain disulfides connect Cys7-Cys141, Cys28-Cys44, Cys78-Cys236, Cys120-Cys190, Cys152-Cys169, and Cys180-Cys205. Residues His43 and Asp88 each act as charge relay system in the active site. Catalysis depends on Ser184, which acts as the Charge relay system.

Belongs to the peptidase S1 family. Snake venom subfamily. As to quaternary structure, monomer. As to expression, expressed by the venom gland.

The protein resides in the secreted. Inhibited by Cu(2+) and, to a lesser extent, by Zn(2+) and Ba(2+). Not inhibited by Ca(2+) and Mg(2+). Functionally, thrombin-like snake venom serine protease. Releases fibrinopeptide A and B in the conversion of fibrinogen to fibrin, with preferential activity on the alpha chain of fibrinogen. Also hydrolyzes N-p-toluensulfonyl arginine ester (TAME) and chromogenic artificial substrates of the blood coagulation cascade: S-2222 for factor Xa, S-2302 for kallikrein and S-2238 for thrombin. When tested in vitro, the recombinant protein does not degrade blood clots, suggesting that this toxin lacks fibrinolytic activity. In addition, it moderately inhibits human Kv10.1/KCNH1/EAG1 currents, with a mechanism independent of its enzymatic activity. It selectively blocks Kv10.1/KCNH1/EAG1 in a time and dose-dependent manner (IC(50)=4.2 uM for native protein and IC(50)=2.5 uM for recombinant protein). It may have a preference in interacting with Kv10.1/KCNH1/EAG1 in its closed state, since the inhibitory effect of the toxin is decreased at more depolarized potentials. Corroboratively, it may have possible antitumor applications, since it reduces the viability of human breast cancer cell line MCF-7, which strongly expresses Kv10.1/KCNH1/EAG1, but does not affect the liver carcinoma and the non-tumorigenic epithelial breast cell lines, which weakly express Kv10.1/KCNH1/EAG1. When tested on peripheral blood mononuclear cells (PBMC), the native protein shows mild cytotoxicity, whereas the recombinant protein does not show any cytotoxicity. Native form is not immununogenic, since it does not induce statistically significant antibody production in mice, whereas recombinant form shows an antibody titer slightly higher than the native form. In vivo, subplantar injection in mice paw induces a discreet paw edema. In addition, intraperitoneal injection of the recombinant protein into mice led to fibrinogen depletion, resulting in the blood incoagulability. This is Thrombin-like enzyme collinein-1 from Crotalus durissus collilineatus (Brazilian rattlesnake).